The chain runs to 356 residues: Probable dual-specificity RNA methyltransferase RlmN (356 aa).

Glutamate 97 serves as the catalytic Proton acceptor. Residues 103-333 form the Radical SAM core domain; that stretch reads YHHGNSVCIS…VTIRREMGSD (231 aa). Cysteine 110 and cysteine 338 are disulfide-bonded. [4Fe-4S] cluster contacts are provided by cysteine 117, cysteine 121, and cysteine 124. Residues 164-165, serine 196, 219-221, and asparagine 295 each bind S-adenosyl-L-methionine; these read GE and SLH. Cysteine 338 (S-methylcysteine intermediate) is an active-site residue.

It belongs to the radical SAM superfamily. RlmN family. The cofactor is [4Fe-4S] cluster.

Its subcellular location is the cytoplasm. The catalysed reaction is adenosine(2503) in 23S rRNA + 2 reduced [2Fe-2S]-[ferredoxin] + 2 S-adenosyl-L-methionine = 2-methyladenosine(2503) in 23S rRNA + 5'-deoxyadenosine + L-methionine + 2 oxidized [2Fe-2S]-[ferredoxin] + S-adenosyl-L-homocysteine. The enzyme catalyses adenosine(37) in tRNA + 2 reduced [2Fe-2S]-[ferredoxin] + 2 S-adenosyl-L-methionine = 2-methyladenosine(37) in tRNA + 5'-deoxyadenosine + L-methionine + 2 oxidized [2Fe-2S]-[ferredoxin] + S-adenosyl-L-homocysteine. In terms of biological role, specifically methylates position 2 of adenine 2503 in 23S rRNA and position 2 of adenine 37 in tRNAs. In Lachnoclostridium phytofermentans (strain ATCC 700394 / DSM 18823 / ISDg) (Clostridium phytofermentans), this protein is Probable dual-specificity RNA methyltransferase RlmN.